We begin with the raw amino-acid sequence, 253 residues long: Histone-arginine methyltransferase METTL23 (253 aa).

The segment at 1-23 (MDSVRPRAPWAPPPDPASLDSPT) is disordered.

This sequence belongs to the methyltransferase superfamily. METTL23 family. Interacts with HSPA5, HSP90B1, TUBULIN, UGGT1 and UGGT2. Interacts with TET3. Interacts with STPG4. As to expression, ubiquitously expressed.

It localises to the nucleus. The protein resides in the cytoplasm. It catalyses the reaction L-arginyl-[protein] + 2 S-adenosyl-L-methionine = N(omega),N(omega)-dimethyl-L-arginyl-[protein] + 2 S-adenosyl-L-homocysteine + 2 H(+). Functionally, histone methyltransferase that dimethylates histone H3 at 'Arg-17', forming asymmetric dimethylarginine (H3R17me2a), leading to activate transcription via chromatin remodeling. Maternal factor involved in epigenetic chromatin reprogramming of the paternal genome in the zygote: mediates H3R17me2a, promoting histone H3.3 incorporation in the male pronucleus, leading to TET3 recruitment and subsequent DNA demethylation. This Mus musculus (Mouse) protein is Histone-arginine methyltransferase METTL23.